The chain runs to 527 residues: Cytochrome b5 reductase 4 (527 aa).

The interval 1–24 (MLNVPSQAFPAAGSQQRVAPAGQS) is disordered. In terms of domain architecture, Cytochrome b5 heme-binding spans 56 to 132 (LIEVTEDELK…LKECLVGRMA (77 aa)). Positions 91 and 114 each coordinate heme. The disordered stretch occupies residues 138–171 (ALQAHTEKTESTHLNGLSAPPSLRPEPLSAPLPA). The CS domain occupies 173 to 264 (DHRPRYDWFQ…SVKEKWTQLG (92 aa)). The 112-residue stretch at 281–392 (LFYRECVLLS…GGPEGSFTLR (112 aa)) folds into the FAD-binding FR-type domain. FAD-binding positions include 372 to 387 (ANLPIGASLSVGGPEG) and 399 to 431 (HLYMLAAGTGFTPMARLIRLALQDFTVIRKMKL).

It belongs to the flavoprotein pyridine nucleotide cytochrome reductase family. It depends on FAD as a cofactor.

The protein resides in the endoplasmic reticulum. It catalyses the reaction 2 Fe(III)-[cytochrome b5] + NADH = 2 Fe(II)-[cytochrome b5] + NAD(+) + H(+). Functionally, NADH-cytochrome b5 reductase involved in endoplasmic reticulum stress response pathway. This is Cytochrome b5 reductase 4 (cyb5r4) from Danio rerio (Zebrafish).